Here is a 608-residue protein sequence, read N- to C-terminus: Fatty acid amide hydrolase (608 aa).

Catalysis depends on charge relay system residues Lys-206 and Ser-282. Residue 303 to 306 (GGGS) coordinates substrate. Ser-306 (acyl-ester intermediate) is an active-site residue.

Belongs to the amidase family. As to quaternary structure, forms homodimers.

It localises to the endoplasmic reticulum membrane. The protein localises to the cell membrane. The catalysed reaction is N-(9Z,12Z-octadecadienoyl)-ethanolamine + H2O = ethanolamine + (9Z,12Z)-octadecadienoate. The enzyme catalyses N-hexadecanoylethanolamine + H2O = ethanolamine + hexadecanoate. It carries out the reaction N-dodecanoylethanolamine + H2O = dodecanoate + ethanolamine. Its activity is regulated as follows. Inhibited by methyl arachidonyl fluorophosphonate (MAFP). Its function is as follows. Catalyzes the hydrolysis of bioactive endogenous fatty acid amides to their corresponding acids. The hydrolysis of endogenous amidated lipids terminates their participation as lipid mediators in various signaling systems. Converts a wide range of N-acylethanolamines (NAEs) to their corresponding free fatty acids and ethanolamine. The polypeptide is Fatty acid amide hydrolase (Oryza sativa subsp. indica (Rice)).